Consider the following 226-residue polypeptide: LexA repressor (226 aa).

A DNA-binding region (H-T-H motif) is located at residues 42-62; sequence MREIGDAVGLASLSSVTHQLN. Residues Ser-150 and Lys-187 each act as for autocatalytic cleavage activity in the active site.

It belongs to the peptidase S24 family. As to quaternary structure, homodimer.

The catalysed reaction is Hydrolysis of Ala-|-Gly bond in repressor LexA.. Its function is as follows. Represses a number of genes involved in the response to DNA damage (SOS response), including recA and lexA. In the presence of single-stranded DNA, RecA interacts with LexA causing an autocatalytic cleavage which disrupts the DNA-binding part of LexA, leading to derepression of the SOS regulon and eventually DNA repair. This is LexA repressor from Clavibacter sepedonicus (Clavibacter michiganensis subsp. sepedonicus).